Consider the following 204-residue polypeptide: Imidazoleglycerol-phosphate dehydratase (204 aa).

The protein belongs to the imidazoleglycerol-phosphate dehydratase family.

The protein localises to the cytoplasm. It carries out the reaction D-erythro-1-(imidazol-4-yl)glycerol 3-phosphate = 3-(imidazol-4-yl)-2-oxopropyl phosphate + H2O. It functions in the pathway amino-acid biosynthesis; L-histidine biosynthesis; L-histidine from 5-phospho-alpha-D-ribose 1-diphosphate: step 6/9. The sequence is that of Imidazoleglycerol-phosphate dehydratase from Albidiferax ferrireducens (strain ATCC BAA-621 / DSM 15236 / T118) (Rhodoferax ferrireducens).